The sequence spans 262 residues: Small ribosomal subunit protein eS4 (262 aa).

The S4 RNA-binding domain maps to Leu-42–Val-105.

Belongs to the eukaryotic ribosomal protein eS4 family.

The protein is Small ribosomal subunit protein eS4 (RPS4) of Candida albicans (Yeast).